The chain runs to 537 residues: Chaperonin GroEL (537 aa).

ATP contacts are provided by residues Thr-29–Pro-32, Asp-86–Thr-90, Gly-413, and Asp-492.

This sequence belongs to the chaperonin (HSP60) family. Forms a cylinder of 14 subunits composed of two heptameric rings stacked back-to-back. Interacts with the co-chaperonin GroES.

It is found in the cytoplasm. It carries out the reaction ATP + H2O + a folded polypeptide = ADP + phosphate + an unfolded polypeptide.. Functionally, together with its co-chaperonin GroES, plays an essential role in assisting protein folding. The GroEL-GroES system forms a nano-cage that allows encapsulation of the non-native substrate proteins and provides a physical environment optimized to promote and accelerate protein folding. This chain is Chaperonin GroEL, found in Dehalococcoides mccartyi (strain ATCC BAA-2266 / KCTC 15142 / 195) (Dehalococcoides ethenogenes (strain 195)).